The sequence spans 728 residues: Tripartite terminase subunit 1 (728 aa).

A C3H1-type zinc finger spans residues 186-214; it reads CASCFAEAAMLPNQGESVLSMLAAVNCNH. The tract at residues 239–278 is disordered; it reads ARAAGRAGGGRESERRGREDADDEEDDEEEPRDGQGDAGD. A compositionally biased stretch (basic and acidic residues) spans 247 to 257; it reads GGRESERRGRE. Over residues 258 to 269 the composition is skewed to acidic residues; that stretch reads DADDEEDDEEEP. Residue 653–660 participates in ATP binding; that stretch reads YNRVWEKS.

It belongs to the herpesviridae TRM1 protein family. As to quaternary structure, associates with TRM2 and TRM3 to form the tripartite terminase complex. Interacts with portal protein.

It is found in the host nucleus. In terms of biological role, component of the molecular motor that translocates viral genomic DNA in empty capsid during DNA packaging. Forms a tripartite terminase complex together with TRM2 and TRM3 in the host cytoplasm. Once the complex reaches the host nucleus, it interacts with the capsid portal vertex. This portal forms a ring in which genomic DNA is translocated into the capsid. TRM1 carries an endonuclease activity that plays an important role for the cleavage of concatemeric viral DNA into unit length genomes. The protein is Tripartite terminase subunit 1 of Equine herpesvirus 2 (strain 86/87) (EHV-2).